Reading from the N-terminus, the 357-residue chain is Spore wall and anchoring disk complex protein EnP1 (357 aa).

The N-terminal stretch at Met-1–Ala-16 is a signal peptide. A glycan (N-linked (GlcNAc...) asparagine) is linked at Asn-47. The HBM1 signature appears at Glu-150–Ile-158. Residues Leu-329–Gly-334 carry the HBM2 motif.

The protein resides in the spore wall. It is found in the spore. Its subcellular location is the perispore. In terms of biological role, spore wall protein involved in the adhesion to host cells surface glycoaminoglycans (GAGs). Microsporidian spore adherence is an integral part of activation and host cell invasion which requires the extrusion at the spore apex of a very long and coiled structure, the polar tube, through which the sporoplasm is pushed to enter into the potential host cell. The polypeptide is Spore wall and anchoring disk complex protein EnP1 (EnP1) (Encephalitozoon cuniculi (strain GB-M1) (Microsporidian parasite)).